The sequence spans 88 residues: Small ribosomal subunit protein bS20 (88 aa).

The segment at 1–27 (MANSKSAKKRALQSEKRRQHNASRRSM) is disordered.

The protein belongs to the bacterial ribosomal protein bS20 family.

In terms of biological role, binds directly to 16S ribosomal RNA. The polypeptide is Small ribosomal subunit protein bS20 (Shewanella denitrificans (strain OS217 / ATCC BAA-1090 / DSM 15013)).